Consider the following 94-residue polypeptide: Potassium channel protein kcv (94 aa).

Residues 14–34 (FMIHLFILAMFVMIYKFFPGG) traverse the membrane as a helical segment. N-linked (GlcNAc...) asparagine; by host glycosylation is present at N38. A helical transmembrane segment spans residues 74-94 (TGAKLCTIAHIVTVFFIVLTL).

It belongs to the two pore domain potassium channel (TC 1.A.1.12) family.

The protein localises to the membrane. Functionally, potassium-selective channel essential in the virus replication cycle. May be involved in preventing multiple infections (Potential). This chain is Potassium channel protein kcv (A250R), found in Paramecium bursaria Chlorella virus 1 (PBCV-1).